Reading from the N-terminus, the 449-residue chain is 1H-pyrrole-2-carbonyl-[peptidyl-carrier protein] chlorinase (449 aa).

FAD contacts are provided by Ala16, Glu35, Arg41, His43, Val44, Ser47, Arg123, Ile147, and Asp316. Chloride contacts are provided by Ser327 and Gly328. Val329 is an FAD binding site.

This sequence belongs to the flavin-dependent halogenase family. Homodimer.

The enzyme catalyses (1H-pyrrole-2-carbonyl)-[peptidyl-carrier protein] + 2 FADH2 + 2 chloride + 2 O2 = (4,5-dichloro-1H-pyrrole-2-carbonyl)-[peptidyl-carrier protein] + 2 FAD + 4 H2O. It catalyses the reaction (1H-pyrrole-2-carbonyl)-[peptidyl-carrier protein] + FADH2 + chloride + O2 = (5-chloro-1H-pyrrole-2-carbonyl)-[peptidyl-carrier protein] + FAD + 2 H2O. It carries out the reaction (5-chloro-1H-pyrrole-2-carbonyl)-[peptidyl-carrier protein] + FADH2 + chloride + O2 = (4,5-dichloro-1H-pyrrole-2-carbonyl)-[peptidyl-carrier protein] + FAD + 2 H2O. The protein operates within antibiotic biosynthesis. Its function is as follows. Involved in the biosynthesis of the antibiotic pyoluteorin. Catalyzes the dichlorination of the pyrrole ring of pyrrolyl-S-PltL, generating the 5-chloropyrrolyl-S-PltL intermediate and then the 4,5-dichloropyrrolyl-S-PltL product. This chain is 1H-pyrrole-2-carbonyl-[peptidyl-carrier protein] chlorinase, found in Pseudomonas fluorescens (strain ATCC BAA-477 / NRRL B-23932 / Pf-5).